A 216-amino-acid polypeptide reads, in one-letter code: Octanoyltransferase (216 aa).

Residues 32–207 (PDSQDEIWLV…QLVKHLDYAE (176 aa)) enclose the BPL/LPL catalytic domain. Substrate contacts are provided by residues 71 to 78 (RGGQVTYH), 138 to 140 (SLG), and 151 to 153 (GLA). The active-site Acyl-thioester intermediate is cysteine 169.

It belongs to the LipB family.

The protein resides in the cytoplasm. It carries out the reaction octanoyl-[ACP] + L-lysyl-[protein] = N(6)-octanoyl-L-lysyl-[protein] + holo-[ACP] + H(+). The protein operates within protein modification; protein lipoylation via endogenous pathway; protein N(6)-(lipoyl)lysine from octanoyl-[acyl-carrier-protein]: step 1/2. In terms of biological role, catalyzes the transfer of endogenously produced octanoic acid from octanoyl-acyl-carrier-protein onto the lipoyl domains of lipoate-dependent enzymes. Lipoyl-ACP can also act as a substrate although octanoyl-ACP is likely to be the physiological substrate. The sequence is that of Octanoyltransferase from Pseudomonas putida (strain ATCC 47054 / DSM 6125 / CFBP 8728 / NCIMB 11950 / KT2440).